Consider the following 229-residue polypeptide: PKHD-type hydroxylase Nham_1514 (229 aa).

The Fe2OG dioxygenase domain maps to Gln-78–Ser-180. Residues His-98, Asp-100, and His-161 each coordinate Fe cation. Arg-171 lines the 2-oxoglutarate pocket.

Requires Fe(2+) as cofactor. It depends on L-ascorbate as a cofactor.

The sequence is that of PKHD-type hydroxylase Nham_1514 from Nitrobacter hamburgensis (strain DSM 10229 / NCIMB 13809 / X14).